The chain runs to 228 residues: Uracil-DNA glycosylase (228 aa).

Aspartate 64 functions as the Proton acceptor in the catalytic mechanism.

This sequence belongs to the uracil-DNA glycosylase (UDG) superfamily. UNG family. In terms of assembly, monomer.

The protein resides in the cytoplasm. It carries out the reaction Hydrolyzes single-stranded DNA or mismatched double-stranded DNA and polynucleotides, releasing free uracil.. Its function is as follows. Excises uracil residues from the DNA which can arise as a result of misincorporation of dUMP residues by DNA polymerase or due to deamination of cytosine. The sequence is that of Uracil-DNA glycosylase from Escherichia coli O6:H1 (strain CFT073 / ATCC 700928 / UPEC).